The following is a 171-amino-acid chain: Ly6/PLAUR domain-containing protein 6 (171 aa).

Residues 1–25 (MEPSPALAWLLLLSLVADCLKAAQS) form the signal peptide. Residues 47–141 (FKCFTCEKAA…PRNETDATFA (95 aa)) enclose the UPAR/Ly6 domain. 6 disulfide bridges follow: cysteine 49–cysteine 77, cysteine 52–cysteine 61, cysteine 70–cysteine 96, cysteine 102–cysteine 121, cysteine 107–cysteine 118, and cysteine 122–cysteine 127. The NxI motif signature appears at 88–90 (NSI). N-linked (GlcNAc...) asparagine glycans are attached at residues asparagine 134 and asparagine 147. The GPI-anchor amidated asparagine moiety is linked to residue asparagine 147. A propeptide spans 148 to 171 (QTNGHPHCVSVIVSCLWVWLGLTL) (removed in mature form).

In terms of assembly, interacts with nicotinic acetylcholine receptors (nAChRs) including CHRNA3, CHRNA4, CHRNA5, CHRNA6, CHRNA7, CHRNB2 and CHRNB4. Interacts (via NxI motif) with LRP6. As to expression, detected in the frontal cortex and hippocampus (at protein level). Highly expressed in the brain and spinal cord, as well as dorsal root and trigeminal ganglia.

Its subcellular location is the secreted. It is found in the cytoplasm. The protein resides in the cell membrane. The protein localises to the synapse. It localises to the synaptosome. Its subcellular location is the membrane raft. It is found in the cell projection. The protein resides in the dendrite. The protein localises to the perikaryon. Functionally, acts as a modulator of nicotinic acetylcholine receptors (nAChRs) function in the brain. Inhibits nicotine-induced Ca(2+) influx through nAChRs. In vitro, specifically inhibits alpha-3:beta-4 and alpha-7 nAChR currents in an allosteric manner. Acts as a positive regulator of Wnt/beta-catenin signaling. The chain is Ly6/PLAUR domain-containing protein 6 (Lypd6) from Mus musculus (Mouse).